The chain runs to 396 residues: Elongation factor Tu (396 aa).

Residues 10-206 enclose the tr-type G domain; that stretch reads KPHVNVGTIG…VLDTYIPEPE (197 aa). Residues 19–26 form a G1 region; that stretch reads GHVDHGKT. GTP is bound at residue 19 to 26; that stretch reads GHVDHGKT. T26 serves as a coordination point for Mg(2+). The segment at 60-64 is G2; it reads GITIN. The tract at residues 81 to 84 is G3; the sequence is DCPG. Residues 81–85 and 136–139 each bind GTP; these read DCPGH and NKCD. Positions 136-139 are G4; that stretch reads NKCD. Residues 174–176 form a G5 region; the sequence is SAT.

This sequence belongs to the TRAFAC class translation factor GTPase superfamily. Classic translation factor GTPase family. EF-Tu/EF-1A subfamily. As to quaternary structure, monomer.

It localises to the cytoplasm. The enzyme catalyses GTP + H2O = GDP + phosphate + H(+). In terms of biological role, GTP hydrolase that promotes the GTP-dependent binding of aminoacyl-tRNA to the A-site of ribosomes during protein biosynthesis. This chain is Elongation factor Tu, found in Psychrobacter cryohalolentis (strain ATCC BAA-1226 / DSM 17306 / VKM B-2378 / K5).